Consider the following 168-residue polypeptide: Regulatory protein RecX (168 aa).

Belongs to the RecX family.

Its subcellular location is the cytoplasm. Modulates RecA activity. In Serratia proteamaculans (strain 568), this protein is Regulatory protein RecX.